The chain runs to 370 residues: MAERELYIGVMSGTSLDGVDTALVALQDDNIELLAHHDYPIPADLKQRLLNVCIGQPTTLIAMGELEHDLGHLFSDAVLALLQHSGYRAEHIRAIGCHGQTVFHQPTGTKPFTMQIGDANIIATRTGITTVADFRRKDVALGGQGAPLVPAFHRTIFHAEQSTVVVLNIGGIANISVLKPNGEVVGYDTGPGNMLMDSWCQKERNQPYDKDALWAKQGSVNAALLSHLKQDHYFALPAPKSTGRELFNLPWLETQLATFSVDATDVQRTLCEFTAQTIVEQVAPFAEGPQPQLLVCGGGAQNPLLMERLQALLPSWQVAPTTQMGVDGDNMEAMAFAWLAQRRIHGLPSNLPAVTGASRLASLGVIYYPD.

Position 13–20 (13–20) interacts with ATP; sequence GTSLDGVD.

This sequence belongs to the anhydro-N-acetylmuramic acid kinase family.

It carries out the reaction 1,6-anhydro-N-acetyl-beta-muramate + ATP + H2O = N-acetyl-D-muramate 6-phosphate + ADP + H(+). It participates in amino-sugar metabolism; 1,6-anhydro-N-acetylmuramate degradation. Its pathway is cell wall biogenesis; peptidoglycan recycling. Catalyzes the specific phosphorylation of 1,6-anhydro-N-acetylmuramic acid (anhMurNAc) with the simultaneous cleavage of the 1,6-anhydro ring, generating MurNAc-6-P. Is required for the utilization of anhMurNAc either imported from the medium or derived from its own cell wall murein, and thus plays a role in cell wall recycling. The sequence is that of Anhydro-N-acetylmuramic acid kinase from Vibrio cholerae serotype O1 (strain ATCC 39315 / El Tor Inaba N16961).